Here is a 136-residue protein sequence, read N- to C-terminus: Large ribosomal subunit protein bL17 (136 aa).

It belongs to the bacterial ribosomal protein bL17 family. Part of the 50S ribosomal subunit. Contacts protein L32.

This chain is Large ribosomal subunit protein bL17, found in Methylobacterium radiotolerans (strain ATCC 27329 / DSM 1819 / JCM 2831 / NBRC 15690 / NCIMB 10815 / 0-1).